Here is a 718-residue protein sequence, read N- to C-terminus: U-box domain-containing protein 5 (718 aa).

In terms of domain architecture, U-box spans 218–292 (TLPEKFKCTL…SEWCAKNGLD (75 aa)). ARM repeat units follow at residues 493–532 (PHGP…NLSS), 534–571 (MEIC…NLCS), and 573–613 (EKGR…QLCV). Positions 662–704 (KEEEEEVSSRPEGRTTASPTSQVVTPVTHPEPVKITPSPKKSG) are disordered. The segment covering 676–686 (TTASPTSQVVT) has biased composition (polar residues).

The catalysed reaction is S-ubiquitinyl-[E2 ubiquitin-conjugating enzyme]-L-cysteine + [acceptor protein]-L-lysine = [E2 ubiquitin-conjugating enzyme]-L-cysteine + N(6)-ubiquitinyl-[acceptor protein]-L-lysine.. It participates in protein modification; protein ubiquitination. Functions as an E3 ubiquitin ligase. In Arabidopsis thaliana (Mouse-ear cress), this protein is U-box domain-containing protein 5 (PUB5).